Here is a 354-residue protein sequence, read N- to C-terminus: FAD synthetase 1, chloroplastic (354 aa).

Residues 1-75 constitute a chloroplast transit peptide; it reads MLCGGSRASV…SQGDDHPELS (75 aa). A disordered region spans residues 228–248; that stretch reads SVNTEEEDSKSKERGQVSSTR.

The cofactor is Mg(2+).

It localises to the plastid. Its subcellular location is the chloroplast. It carries out the reaction FMN + ATP + H(+) = FAD + diphosphate. It participates in cofactor biosynthesis; FAD biosynthesis; FAD from FMN: step 1/1. Its function is as follows. Catalyzes the adenylation of flavin mononucleotide (FMN) to form flavin adenine dinucleotide (FAD) coenzyme. The protein is FAD synthetase 1, chloroplastic of Arabidopsis thaliana (Mouse-ear cress).